The following is a 78-amino-acid chain: Major outer membrane lipoprotein Lpp 1 (78 aa).

An N-terminal signal peptide occupies residues 1 to 20 (MNRTKLVLGAVILGSTLLAG). Cysteine 21 carries N-palmitoyl cysteine lipidation. Residue cysteine 21 is the site of S-diacylglycerol cysteine attachment. 2 consecutive repeats follow at residues 24–34 (NAKIDQLSSDV) and 38–48 (NAKVDQLSNDV). A coiled-coil region spans residues 27–75 (IDQLSSDVQTLNAKVDQLSNDVNAMRSDVQAAKDDAARANQRLDNQATK). The tract at residues 56 to 78 (QAAKDDAARANQRLDNQATKYRK) is disordered. Polar residues predominate over residues 68 to 78 (RLDNQATKYRK). An N6-murein peptidoglycan lysine modification is found at lysine 78.

Belongs to the Lpp family. In terms of assembly, homotrimer.

The protein resides in the cell outer membrane. It localises to the secreted. Its subcellular location is the cell wall. In terms of biological role, a highly abundant outer membrane lipoprotein that controls the distance between the inner and outer membranes. The only protein known to be covalently linked to the peptidoglycan network (PGN). Also non-covalently binds the PGN. The link between the cell outer membrane and PGN contributes to maintenance of the structural and functional integrity of the cell envelope, and maintains the correct distance between the PGN and the outer membrane. The chain is Major outer membrane lipoprotein Lpp 1 from Salmonella paratyphi A (strain ATCC 9150 / SARB42).